The chain runs to 662 residues: Sodium/glucose cotransporter 1 (662 aa).

At 1–24 (MDSSTWSPATTATTEPLKPHERIR) the chain is on the extracellular side. The helical transmembrane segment at 25-47 (NAADISVIVIYFVVVMAVGLWAM) threads the bilayer. Topologically, residues 48 to 66 (CSTNRGTVGGFFLAGRSMV) are cytoplasmic. The helical transmembrane segment at 67-90 (WWPVGASLFASNIGSGHFVGLAGT) threads the bilayer. Residues 91–95 (GAAAG) lie on the Extracellular side of the membrane. A helical transmembrane segment spans residues 96-117 (IATGGFEWNALIWVVVLGWLFV). Topologically, residues 118-139 (PIYIKAGVVTMPEYLRKRFGGK) are cytoplasmic. Residues 140 to 169 (RIQVYLSILSLMLYIFTKISADIFSGAIFI) traverse the membrane as a helical segment. Residues 170–176 (TLALGLD) are Extracellular-facing. The chain crosses the membrane as a helical span at residues 177–193 (LYLAIFLLLAITGLYTI). Over 194 to 202 (TGGLAAVIY) the chain is Cytoplasmic. A helical transmembrane segment spans residues 203-221 (TDTLQTAIMLVGSFILTGF). The Extracellular segment spans residues 222–275 (AFHEVGGYDAFMEKYMNAIPTVISDGNITIKKECYTPRADSFHIFRDPLKGDLP). N248 is a glycosylation site (N-linked (GlcNAc...) asparagine). 5 disulfides stabilise this stretch: C255-C511, C255-C608, C345-C351, C355-C361, and C517-C522. A helical membrane pass occupies residues 276–295 (WPGLTFGLSILALWYWCTDQ). Residues 296-309 (VIVQRCLSAKNMSH) are Cytoplasmic-facing. The helical transmembrane segment at 310-331 (VKAGCVMCGYFKLLPMFVIVMP) threads the bilayer. The Extracellular segment spans residues 332-375 (GMISRVLYTEKIACTVPSECEKYCGTKVGCSNIAYPTLVVELMP). A helical transmembrane segment spans residues 376–406 (NGLRGLMLSVMLASLMSSLTSIFNSASTLFT). At 407–422 (MDVYTKIRKRASEKEL) the chain is on the cytoplasmic side. A helical transmembrane segment spans residues 423-444 (MIAGRLFILVLIGISIAWVPIV). Residues 445–451 (QSAQSGQ) are Extracellular-facing. Residues 452–477 (LFDYIQSVTSYLGPPIAAVFLLAIFC) traverse the membrane as a helical segment. At 478-481 (KRVN) the chain is on the cytoplasmic side. The helical transmembrane segment at 482–504 (EEGAFWGLVIGCMIGLARMITEF) threads the bilayer. Residues 505-525 (AYGTGSCVEPSNCPTIICGVH) lie on the Extracellular side of the membrane. Residues 526 to 547 (YLYFAIILFVISIIIVLVVSLF) form a helical membrane-spanning segment. The Cytoplasmic portion of the chain corresponds to 548–642 (TKPIPDVHLY…TSEKPLWRTV (95 aa)). A Phosphothreonine modification is found at T587. Residues 643–660 (VNINGIILLTVAVFCHAY) form a helical membrane-spanning segment. Residues 661–662 (FA) are Extracellular-facing.

Belongs to the sodium:solute symporter (SSF) (TC 2.A.21) family. N-glycosylation is not necessary for the cotransporter function.

The protein localises to the apical cell membrane. The enzyme catalyses D-glucose(out) + 2 Na(+)(out) = D-glucose(in) + 2 Na(+)(in). The catalysed reaction is D-galactose(out) + 2 Na(+)(out) = D-galactose(in) + 2 Na(+)(in). Its activity is regulated as follows. Enhanced by the interaction with PDZK1IP1/MAP17; but unlike SLC5A2/SGLT2, PDZK1IP1 is not essential for SLC5A1 transporter activity. Possibly modulated by cholesterol binding. Electrogenic Na(+)-coupled sugar symporter that actively transports D-glucose or D-galactose at the plasma membrane, with a Na(+) to sugar coupling ratio of 2:1. Transporter activity is driven by a transmembrane Na(+) electrochemical gradient set by the Na(+)/K(+) pump. Has a primary role in the transport of dietary monosaccharides from enterocytes to blood. Responsible for the absorption of D-glucose or D-galactose across the apical brush-border membrane of enterocytes, whereas basolateral exit is provided by GLUT2. Additionally, functions as a D-glucose sensor in enteroendocrine cells, triggering the secretion of the incretins GCG and GIP that control food intake and energy homeostasis. Together with SGLT2, functions in reabsorption of D-glucose from glomerular filtrate, playing a nonredundant role in the S3 segment of the proximal tubules. Transports D-glucose into endometrial epithelial cells, controlling glycogen synthesis and nutritional support for the embryo as well as the decidual transformation of endometrium prior to conception. Acts as a water channel enabling passive water transport in response to the osmotic gradient created upon sugar and Na(+) uptake. Has high water conductivity comparable to aquaporins and therefore is expected to play an important role in transepithelial water permeability, especially in the small intestine. The chain is Sodium/glucose cotransporter 1 (SLC5A1) from Sus scrofa (Pig).